Consider the following 66-residue polypeptide: Large ribosomal subunit protein uL29 (66 aa).

It belongs to the universal ribosomal protein uL29 family.

The polypeptide is Large ribosomal subunit protein uL29 (Petrotoga mobilis (strain DSM 10674 / SJ95)).